The primary structure comprises 20 residues: Antimicrobial peptide EP-20 (20 aa).

A disordered region spans residues 1 to 20 (EGPVGLADPDGPASAPLGAP).

The protein resides in the secreted. The synthetic peptide inhibits growth of fungus P.capsici and partially that of V.dahliae, F.graminearum and F.omysporum. The sequence is that of Antimicrobial peptide EP-20 from Xenorhabdus budapestensis.